Consider the following 224-residue polypeptide: Peptidyl-prolyl cis-trans isomerase FKBP3 (224 aa).

N-acetylalanine is present on alanine 2. Serine 36 is modified (phosphoserine). Positions 88 to 118 (VKLSDDKPKDSKSEETLDEGPPKYTKSILKK) are disordered. The span at 89–102 (KLSDDKPKDSKSEE) shows a compositional bias: basic and acidic residues. Lysine 99 bears the N6-acetyllysine mark. Residues 128-224 (GDVVHCWYTG…IFEVELVDID (97 aa)) form the PPIase FKBP-type domain. Position 152 is a phosphoserine (serine 152). Position 170 is an N6-acetyllysine (lysine 170).

Belongs to the FKBP-type PPIase family.

It is found in the nucleus. It carries out the reaction [protein]-peptidylproline (omega=180) = [protein]-peptidylproline (omega=0). Inhibited preferentially by rapamycin over FK506. In terms of biological role, FK506- and rapamycin-binding proteins (FKBPs) constitute a family of receptors for the two immunosuppressants which inhibit T-cell proliferation by arresting two distinct cytoplasmic signal transmission pathways. PPIases accelerate the folding of proteins. The sequence is that of Peptidyl-prolyl cis-trans isomerase FKBP3 (Fkbp3) from Mus musculus (Mouse).